A 250-amino-acid chain; its full sequence is 5-oxoprolinase subunit A (250 aa).

This sequence belongs to the LamB/PxpA family. As to quaternary structure, forms a complex composed of PxpA, PxpB and PxpC.

The catalysed reaction is 5-oxo-L-proline + ATP + 2 H2O = L-glutamate + ADP + phosphate + H(+). Catalyzes the cleavage of 5-oxoproline to form L-glutamate coupled to the hydrolysis of ATP to ADP and inorganic phosphate. The polypeptide is 5-oxoprolinase subunit A (Staphylococcus haemolyticus (strain JCSC1435)).